Here is a 426-residue protein sequence, read N- to C-terminus: Glutamate-1-semialdehyde 2,1-aminomutase (426 aa).

K265 is subject to N6-(pyridoxal phosphate)lysine.

This sequence belongs to the class-III pyridoxal-phosphate-dependent aminotransferase family. HemL subfamily. In terms of assembly, homodimer. Pyridoxal 5'-phosphate serves as cofactor.

The protein resides in the cytoplasm. It catalyses the reaction (S)-4-amino-5-oxopentanoate = 5-aminolevulinate. The protein operates within porphyrin-containing compound metabolism; protoporphyrin-IX biosynthesis; 5-aminolevulinate from L-glutamyl-tRNA(Glu): step 2/2. The sequence is that of Glutamate-1-semialdehyde 2,1-aminomutase from Aliarcobacter butzleri (strain RM4018) (Arcobacter butzleri).